Consider the following 186-residue polypeptide: Dihydrofolate reductase (186 aa).

In terms of domain architecture, DHFR spans 2–180 (RLNVVVAVSE…FTFKFCVYDV (179 aa)). NADP(+)-binding positions include Ala8 and 14 to 20 (GIGKGGG). 28–33 (DMEFFK) contacts substrate. 51-53 (RVT) is an NADP(+) binding site. Residue Arg67 participates in substrate binding. Residues 73–75 (SST) and 112–119 (GGYRLYKE) contribute to the NADP(+) site.

Belongs to the dihydrofolate reductase family. As to quaternary structure, monomer.

It carries out the reaction (6S)-5,6,7,8-tetrahydrofolate + NADP(+) = 7,8-dihydrofolate + NADPH + H(+). The protein operates within cofactor biosynthesis; tetrahydrofolate biosynthesis; 5,6,7,8-tetrahydrofolate from 7,8-dihydrofolate: step 1/1. Key enzyme in folate metabolism. Contributes to the de novo mitochondrial thymidylate biosynthesis pathway. Catalyzes an essential reaction for de novo glycine and purine synthesis, and for DNA precursor synthesis. The protein is Dihydrofolate reductase of Schistosoma mansoni (Blood fluke).